The chain runs to 359 residues: UDP-N-acetylglucosamine--N-acetylmuramyl-(pentapeptide) pyrophosphoryl-undecaprenol N-acetylglucosamine transferase (359 aa).

UDP-N-acetyl-alpha-D-glucosamine contacts are provided by residues 15–17 (TGG), asparagine 127, arginine 166, serine 191, isoleucine 245, 264–269 (ALTVSE), and glutamine 290.

It belongs to the glycosyltransferase 28 family. MurG subfamily.

Its subcellular location is the cell inner membrane. It catalyses the reaction di-trans,octa-cis-undecaprenyl diphospho-N-acetyl-alpha-D-muramoyl-L-alanyl-D-glutamyl-meso-2,6-diaminopimeloyl-D-alanyl-D-alanine + UDP-N-acetyl-alpha-D-glucosamine = di-trans,octa-cis-undecaprenyl diphospho-[N-acetyl-alpha-D-glucosaminyl-(1-&gt;4)]-N-acetyl-alpha-D-muramoyl-L-alanyl-D-glutamyl-meso-2,6-diaminopimeloyl-D-alanyl-D-alanine + UDP + H(+). It functions in the pathway cell wall biogenesis; peptidoglycan biosynthesis. Cell wall formation. Catalyzes the transfer of a GlcNAc subunit on undecaprenyl-pyrophosphoryl-MurNAc-pentapeptide (lipid intermediate I) to form undecaprenyl-pyrophosphoryl-MurNAc-(pentapeptide)GlcNAc (lipid intermediate II). The polypeptide is UDP-N-acetylglucosamine--N-acetylmuramyl-(pentapeptide) pyrophosphoryl-undecaprenol N-acetylglucosamine transferase (Pseudomonas putida (strain ATCC 47054 / DSM 6125 / CFBP 8728 / NCIMB 11950 / KT2440)).